We begin with the raw amino-acid sequence, 503 residues long: Guanosine-5'-triphosphate,3'-diphosphate pyrophosphatase (503 aa).

This sequence belongs to the GppA/Ppx family. GppA subfamily.

It carries out the reaction guanosine 3'-diphosphate 5'-triphosphate + H2O = guanosine 3',5'-bis(diphosphate) + phosphate + H(+). The protein operates within purine metabolism; ppGpp biosynthesis; ppGpp from GTP: step 2/2. In terms of biological role, catalyzes the conversion of pppGpp to ppGpp. Guanosine pentaphosphate (pppGpp) is a cytoplasmic signaling molecule which together with ppGpp controls the 'stringent response', an adaptive process that allows bacteria to respond to amino acid starvation, resulting in the coordinated regulation of numerous cellular activities. The sequence is that of Guanosine-5'-triphosphate,3'-diphosphate pyrophosphatase from Pseudoalteromonas atlantica (strain T6c / ATCC BAA-1087).